Here is a 555-residue protein sequence, read N- to C-terminus: Synaptotagmin-14 (555 aa).

The Extracellular portion of the chain corresponds to 1–24 (MAIEGGERTCGVHELICIRKVSPE). The chain crosses the membrane as a helical; Signal-anchor for type III membrane protein span at residues 25–47 (AVGFLSAVGVFIILMLLLFLYIN). Residues 48–555 (KKFCFENVGG…VCRWHALLES (508 aa)) are Cytoplasmic-facing. Disordered stretches follow at residues 157 to 179 (TPPL…HLSC) and 222 to 257 (GYEE…DPEP). C2 domains are found at residues 260–379 (KYGT…SLPV) and 415–550 (SVPE…CRWH).

Belongs to the synaptotagmin family. As to quaternary structure, homodimer. Can also form heterodimers. In terms of tissue distribution, highly expressed in fetal and adult brain tissue.

It localises to the membrane. Its function is as follows. May be involved in the trafficking and exocytosis of secretory vesicles in non-neuronal tissues. Is Ca(2+)-independent. This is Synaptotagmin-14 (SYT14) from Homo sapiens (Human).